Consider the following 326-residue polypeptide: Vitamin B12 import system permease protein BtuC (326 aa).

A run of 9 helical transmembrane segments spans residues 15 to 35, 61 to 81, 88 to 108, 112 to 132, 146 to 166, 184 to 204, 240 to 260, 274 to 294, and 302 to 322; these read WLLCLSVLMLLALLLSLCAGE, LAVLLVGAALAISGAVMQALF, PGLLGVSNGAGVGLIAAVLLG, LPNWALGLCAIAGALIITLIL, LLAGVALGIICSALMTWAIYF, GGVDWRQSWLMLALIPVLLWI, GWMVGVSVALAGAIGFIGLVI, VLLPGCALAGASALLLADIVA, and ELPIGVVTATLGAPVFIWLLL.

It belongs to the binding-protein-dependent transport system permease family. FecCD subfamily. The complex is composed of two ATP-binding proteins (BtuD), two transmembrane proteins (BtuC) and a solute-binding protein (BtuF).

Its subcellular location is the cell inner membrane. Functionally, part of the ABC transporter complex BtuCDF involved in vitamin B12 import. Involved in the translocation of the substrate across the membrane. The polypeptide is Vitamin B12 import system permease protein BtuC (Escherichia coli O9:H4 (strain HS)).